Reading from the N-terminus, the 49-residue chain is Delta-actitoxin-Axm1b (49 aa).

Residues 1–7 (GVPCLCD) are well-structured region. 3 cysteine pairs are disulfide-bonded: cysteine 4-cysteine 46, cysteine 6-cysteine 36, and cysteine 29-cysteine 47. The tract at residues 8 to 17 (SDGPRPRGNT) is arg-14 loop (non-well-structured region). The well-structured region stretch occupies residues 18–49 (LSGILWFYPSGCPSGWHNCKAHGPNIGWCCKK).

The protein belongs to the sea anemone sodium channel inhibitory toxin family. Type I subfamily.

The protein localises to the secreted. The protein resides in the nematocyst. Its function is as follows. Binds specifically to voltage-gated sodium channels (Nav) (site 3), thereby delaying their inactivation. This toxin has the highest affinity of all anemone toxins for the mammalian sodium channel, whereas its paralog Anthopleurin-A retains the greatest capacity to discriminate between cardiac (Nav1.5/SCN5A) and neuronal sodium channels. When tested electrophysiologically, this toxin exhibits a high affinity for multiple sodium channels with a 50-fold preference for rat cardiac (Nav1.5/SCN5A) over neuronal channels (0.1 nM versus 5 nM). When tested by ion flux, the affinities are similar and appear to have higher affinity (9 nM versus 22 nM). The residue Lys-37 of this toxin has been shown to interact with channel Nav1.5 (residue Asp-1612 in rat and Asp-1610 in human), which is located in the DIV S3-S4 linker (corresponding to channel site 3). Selectively modifies sodium channel inactivation from the open state with little effect on channel activation or on inactivation from closed states. Does not display phospholipid-binding activities, suggesting that the domain IV S3-S4 linker is located at the extracellular surface and not buried in the phospholipid bilayer. In Anthopleura xanthogrammica (Giant green sea anemone), this protein is Delta-actitoxin-Axm1b.